A 581-amino-acid polypeptide reads, in one-letter code: Polypeptide N-acetylgalactosaminyltransferase 12 (581 aa).

Residues 1-19 (MWGRTARRRCPRELRRGRE) are Cytoplasmic-facing. Residues 20–37 (ALLVLLALLALAGLGSVL) form a helical; Signal-anchor for type II membrane protein membrane-spanning segment. The Lumenal portion of the chain corresponds to 38-581 (RAQRGAGAGA…QKWFFKERML (544 aa)). Positions 43–67 (AGAGAAEPGPPRTPRPGRREPVMPR) are disordered. 5 cysteine pairs are disulfide-bonded: C125–C358, C349–C422, C458–C479, C506–C521, and C547–C566. The segment at 135–244 (LPRTSVIIAF…EGWLEPLLQR (110 aa)) is catalytic subdomain A. Substrate-binding residues include D176 and R205. Residues D228 and H230 each coordinate Mn(2+). Positions 304-366 (VIRSPTMAGG…PCSHVGHVFP (63 aa)) are catalytic subdomain B. W335 is a binding site for substrate. H363 contacts Mn(2+). Y371 serves as a coordination point for substrate. Residues 445–577 (FFGMLQNKGL…NSDHQKWFFK (133 aa)) enclose the Ricin B-type lectin domain.

It belongs to the glycosyltransferase 2 family. GalNAc-T subfamily. Mn(2+) serves as cofactor. As to expression, widely expressed at different levels of expression. Highly expressed in digestive organs such as small intestine, stomach, pancreas and colon. Expressed at intermediate level in testis, thyroid gland and spleen. Weakly expressed in whole brain, cerebral cortex, cerebellum, fetal brain, bone marrow, thymus, leukocytes, heart, skeletal muscle, liver, lung, esophagus, kidney, adrenal gland, mammary gland, uterus, placenta, ovary and prostate.

It localises to the golgi apparatus membrane. The enzyme catalyses L-seryl-[protein] + UDP-N-acetyl-alpha-D-galactosamine = a 3-O-[N-acetyl-alpha-D-galactosaminyl]-L-seryl-[protein] + UDP + H(+). It catalyses the reaction L-threonyl-[protein] + UDP-N-acetyl-alpha-D-galactosamine = a 3-O-[N-acetyl-alpha-D-galactosaminyl]-L-threonyl-[protein] + UDP + H(+). It functions in the pathway protein modification; protein glycosylation. Functionally, catalyzes the initial reaction in O-linked oligosaccharide biosynthesis, the transfer of an N-acetyl-D-galactosamine residue to a serine or threonine residue on the protein receptor. Has activity toward non-glycosylated peptides such as Muc5AC, Muc1a and EA2, and no detectable activity with Muc2 and Muc7. Displays enzymatic activity toward the Gal-NAc-Muc5AC glycopeptide, but no detectable activity to mono-GalNAc-glycosylated Muc1a, Muc2, Muc7 and EA2. May play an important role in the initial step of mucin-type oligosaccharide biosynthesis in digestive organs. The polypeptide is Polypeptide N-acetylgalactosaminyltransferase 12 (GALNT12) (Homo sapiens (Human)).